A 1072-amino-acid chain; its full sequence is Carbamoyl phosphate synthase large chain (1072 aa).

The interval 1–401 (MPKRLDINTI…SLLKAVRSLE (401 aa)) is carboxyphosphate synthetic domain. Residues R129, R169, G175, G176, K208, I210, E215, G241, V242, H243, Q284, and E298 each coordinate ATP. An ATP-grasp 1 domain is found at 133-327 (RTLMQDLNEP…IAKLAAKIAV (195 aa)). Residues Q284, E298, and N300 each contribute to the Mg(2+) site. The Mn(2+) site is built by Q284, E298, and N300. Positions 402 to 546 (LGIYHLELDH…YSTYAEENES (145 aa)) are oligomerization domain. Positions 547–929 (IVTDRKSVVV…ALYKGLVASG (383 aa)) are carbamoyl phosphate synthetic domain. In terms of domain architecture, ATP-grasp 2 spans 671 to 861 (EAALTKLGIP…MANVATKVIL (191 aa)). Residues R707, R746, E752, G777, V778, H779, S780, Q820, and E832 each contribute to the ATP site. Residues Q820, E832, and N834 each coordinate Mg(2+). Residues Q820, E832, and N834 each contribute to the Mn(2+) site. One can recognise an MGS-like domain in the interval 930-1072 (INIPTHGSVI…QTKRHEVVHA (143 aa)). The segment at 930–1072 (INIPTHGSVI…QTKRHEVVHA (143 aa)) is allosteric domain.

It belongs to the CarB family. In terms of assembly, composed of two chains; the small (or glutamine) chain promotes the hydrolysis of glutamine to ammonia, which is used by the large (or ammonia) chain to synthesize carbamoyl phosphate. Tetramer of heterodimers (alpha,beta)4. The cofactor is Mg(2+). It depends on Mn(2+) as a cofactor.

The catalysed reaction is hydrogencarbonate + L-glutamine + 2 ATP + H2O = carbamoyl phosphate + L-glutamate + 2 ADP + phosphate + 2 H(+). It carries out the reaction hydrogencarbonate + NH4(+) + 2 ATP = carbamoyl phosphate + 2 ADP + phosphate + 2 H(+). Its pathway is amino-acid biosynthesis; L-arginine biosynthesis; carbamoyl phosphate from bicarbonate: step 1/1. The protein operates within pyrimidine metabolism; UMP biosynthesis via de novo pathway; (S)-dihydroorotate from bicarbonate: step 1/3. Functionally, large subunit of the glutamine-dependent carbamoyl phosphate synthetase (CPSase). CPSase catalyzes the formation of carbamoyl phosphate from the ammonia moiety of glutamine, carbonate, and phosphate donated by ATP, constituting the first step of 2 biosynthetic pathways, one leading to arginine and/or urea and the other to pyrimidine nucleotides. The large subunit (synthetase) binds the substrates ammonia (free or transferred from glutamine from the small subunit), hydrogencarbonate and ATP and carries out an ATP-coupled ligase reaction, activating hydrogencarbonate by forming carboxy phosphate which reacts with ammonia to form carbamoyl phosphate. The protein is Carbamoyl phosphate synthase large chain of Bacillus cereus (strain ATCC 10987 / NRS 248).